The sequence spans 237 residues: Glucosamine-6-phosphate deaminase (237 aa).

The active-site Proton acceptor; for enolization step is the Asp-67. Asn-136 serves as the catalytic For ring-opening step. The active-site Proton acceptor; for ring-opening step is the His-138. Glu-143 acts as the For ring-opening step in catalysis.

It belongs to the glucosamine/galactosamine-6-phosphate isomerase family. NagB subfamily.

The enzyme catalyses alpha-D-glucosamine 6-phosphate + H2O = beta-D-fructose 6-phosphate + NH4(+). It functions in the pathway amino-sugar metabolism; N-acetylneuraminate degradation; D-fructose 6-phosphate from N-acetylneuraminate: step 5/5. Functionally, catalyzes the reversible isomerization-deamination of glucosamine 6-phosphate (GlcN6P) to form fructose 6-phosphate (Fru6P) and ammonium ion. This chain is Glucosamine-6-phosphate deaminase, found in Lysinibacillus sphaericus (strain C3-41).